The following is a 58-amino-acid chain: Small ribosomal subunit protein bS21 (58 aa).

Belongs to the bacterial ribosomal protein bS21 family.

This is Small ribosomal subunit protein bS21 from Staphylococcus saprophyticus subsp. saprophyticus (strain ATCC 15305 / DSM 20229 / NCIMB 8711 / NCTC 7292 / S-41).